The primary structure comprises 124 residues: UPF0102 protein Rcas_2007 (124 aa).

The protein belongs to the UPF0102 family.

This chain is UPF0102 protein Rcas_2007, found in Roseiflexus castenholzii (strain DSM 13941 / HLO8).